A 178-amino-acid chain; its full sequence is Large ribosomal subunit protein uL10 (178 aa).

This sequence belongs to the universal ribosomal protein uL10 family. In terms of assembly, part of the ribosomal stalk of the 50S ribosomal subunit. The N-terminus interacts with L11 and the large rRNA to form the base of the stalk. The C-terminus forms an elongated spine to which L12 dimers bind in a sequential fashion forming a multimeric L10(L12)X complex.

In terms of biological role, forms part of the ribosomal stalk, playing a central role in the interaction of the ribosome with GTP-bound translation factors. In Albidiferax ferrireducens (strain ATCC BAA-621 / DSM 15236 / T118) (Rhodoferax ferrireducens), this protein is Large ribosomal subunit protein uL10.